A 91-amino-acid polypeptide reads, in one-letter code: Small ribosomal subunit protein bS20 (91 aa).

Residues 1–23 (MANTPSAKKRAKQAEKRRSHNAS) are disordered. The span at 7–20 (AKKRAKQAEKRRSH) shows a compositional bias: basic residues.

This sequence belongs to the bacterial ribosomal protein bS20 family.

Binds directly to 16S ribosomal RNA. The protein is Small ribosomal subunit protein bS20 of Pseudomonas paraeruginosa (strain DSM 24068 / PA7) (Pseudomonas aeruginosa (strain PA7)).